A 278-amino-acid chain; its full sequence is Large ribosomal subunit protein uL2 (278 aa).

Disordered stretches follow at residues 33–53 (LTEGKRKTGGRNNKGHVTSRG) and 219–278 (LTRG…KKKR). Basic residues predominate over residues 269 to 278 (IRSRHAKKKR).

It belongs to the universal ribosomal protein uL2 family. Part of the 50S ribosomal subunit. Forms a bridge to the 30S subunit in the 70S ribosome.

Its function is as follows. One of the primary rRNA binding proteins. Required for association of the 30S and 50S subunits to form the 70S ribosome, for tRNA binding and peptide bond formation. It has been suggested to have peptidyltransferase activity; this is somewhat controversial. Makes several contacts with the 16S rRNA in the 70S ribosome. In Sphingopyxis alaskensis (strain DSM 13593 / LMG 18877 / RB2256) (Sphingomonas alaskensis), this protein is Large ribosomal subunit protein uL2.